The following is a 303-amino-acid chain: Quinolinate synthase (303 aa).

Histidine 23 and serine 40 together coordinate iminosuccinate. Cysteine 85 provides a ligand contact to [4Fe-4S] cluster. Iminosuccinate contacts are provided by residues 111–113 (YIN) and serine 128. Residue cysteine 171 participates in [4Fe-4S] cluster binding. Iminosuccinate contacts are provided by residues 197–199 (HPE) and threonine 214. Cysteine 259 is a binding site for [4Fe-4S] cluster.

It belongs to the quinolinate synthase family. Type 2 subfamily. The cofactor is [4Fe-4S] cluster.

The protein localises to the cytoplasm. The enzyme catalyses iminosuccinate + dihydroxyacetone phosphate = quinolinate + phosphate + 2 H2O + H(+). It functions in the pathway cofactor biosynthesis; NAD(+) biosynthesis; quinolinate from iminoaspartate: step 1/1. Catalyzes the condensation of iminoaspartate with dihydroxyacetone phosphate to form quinolinate. This is Quinolinate synthase from Clostridium acetobutylicum (strain ATCC 824 / DSM 792 / JCM 1419 / IAM 19013 / LMG 5710 / NBRC 13948 / NRRL B-527 / VKM B-1787 / 2291 / W).